A 627-amino-acid polypeptide reads, in one-letter code: (-)-beta-pinene synthase 2, chloroplastic (627 aa).

The N-terminal 51 residues, 1-51, are a transit peptide targeting the chloroplast; the sequence is MDLISVLPSASKSCVCLHKPLSSSTHKLKPFCRKIRILGMPRPRKSVLMVS. Mg(2+)-binding residues include aspartate 378, aspartate 382, and aspartate 530. The DDXXD motif motif lies at 378 to 382; it reads DDMYD.

The protein belongs to the terpene synthase family. Tpsd subfamily. The cofactor is Mg(2+). Requires Mn(2+) as cofactor.

Its subcellular location is the plastid. It is found in the chloroplast. It catalyses the reaction (2E)-geranyl diphosphate = (1S,5S)-beta-pinene + diphosphate. The catalysed reaction is (2E)-geranyl diphosphate = (1S,5S)-alpha-pinene + diphosphate. It participates in terpene metabolism; oleoresin biosynthesis. It functions in the pathway secondary metabolite biosynthesis; terpenoid biosynthesis. Its function is as follows. Monoterpene synthase (TPS) involved in the biosynthesis of monoterpene natural products included in conifer oleoresin secretions and volatile emissions; these compounds contribute to biotic and abiotic stress defense against herbivores and pathogens. Catalyzes the conversion of (2E)-geranyl diphosphate (GPP) to (-)-beta-pinene and, to a lower extent, to (-)-alpha-pinene. The polypeptide is (-)-beta-pinene synthase 2, chloroplastic (Pinus banksiana (Jack pine)).